A 232-amino-acid chain; its full sequence is 5'-methylthioadenosine/S-adenosylhomocysteine nucleosidase (232 aa).

E12 acts as the Proton acceptor in catalysis. Residues G78, M153, and M174 to E175 contribute to the substrate site. D198 (proton donor) is an active-site residue.

Belongs to the PNP/UDP phosphorylase family. MtnN subfamily.

It carries out the reaction S-adenosyl-L-homocysteine + H2O = S-(5-deoxy-D-ribos-5-yl)-L-homocysteine + adenine. The enzyme catalyses S-methyl-5'-thioadenosine + H2O = 5-(methylsulfanyl)-D-ribose + adenine. It catalyses the reaction 5'-deoxyadenosine + H2O = 5-deoxy-D-ribose + adenine. It participates in amino-acid biosynthesis; L-methionine biosynthesis via salvage pathway; S-methyl-5-thio-alpha-D-ribose 1-phosphate from S-methyl-5'-thioadenosine (hydrolase route): step 1/2. In terms of biological role, catalyzes the irreversible cleavage of the glycosidic bond in both 5'-methylthioadenosine (MTA) and S-adenosylhomocysteine (SAH/AdoHcy) to adenine and the corresponding thioribose, 5'-methylthioribose and S-ribosylhomocysteine, respectively. Also cleaves 5'-deoxyadenosine, a toxic by-product of radical S-adenosylmethionine (SAM) enzymes, into 5-deoxyribose and adenine. The chain is 5'-methylthioadenosine/S-adenosylhomocysteine nucleosidase from Hydrogenovibrio crunogenus (strain DSM 25203 / XCL-2) (Thiomicrospira crunogena).